A 102-amino-acid chain; its full sequence is Citrate lyase acyl carrier protein (102 aa).

Position 14 is an O-(phosphoribosyl dephospho-coenzyme A)serine (S14).

This sequence belongs to the CitD family. Oligomer with a subunit composition of (alpha,beta,gamma)6.

The protein resides in the cytoplasm. Its function is as follows. Covalent carrier of the coenzyme of citrate lyase. The polypeptide is Citrate lyase acyl carrier protein (Streptococcus pyogenes serotype M4 (strain MGAS10750)).